The following is an 86-amino-acid chain: Cell division topological specificity factor (86 aa).

The protein belongs to the MinE family.

Functionally, prevents the cell division inhibition by proteins MinC and MinD at internal division sites while permitting inhibition at polar sites. This ensures cell division at the proper site by restricting the formation of a division septum at the midpoint of the long axis of the cell. The sequence is that of Cell division topological specificity factor from Stenotrophomonas maltophilia (strain R551-3).